Consider the following 102-residue polypeptide: Small ribosomal subunit protein uS10 (102 aa).

This sequence belongs to the universal ribosomal protein uS10 family. As to quaternary structure, part of the 30S ribosomal subunit.

Its function is as follows. Involved in the binding of tRNA to the ribosomes. The polypeptide is Small ribosomal subunit protein uS10 (Sulfurisphaera tokodaii (strain DSM 16993 / JCM 10545 / NBRC 100140 / 7) (Sulfolobus tokodaii)).